The following is a 279-amino-acid chain: MGLPSRQPRLWLLLLVVLGWPQPCLTLDLIPYTPRITSWDLEGKVTATTFSLEQPRCVLDRHSSAADTVWLVVAFSNASRVFQNPQTLAEIPASPRLLTDGHYMTLPLTMDQLPCEDPADGSGRAPVLRVGNDAGCLADLHQPRYCNAPLPGPGPYRVKFLLTNSRGSPQAETRWSDLIALRQGKSPGSIDTWPGRRSGDMIIITSILSSLAGLLLLAFLAASSVRFSSLWWPEEAPEQLRIGSFMGKRYMTHHIPPSEAATLPVGCEPGLERFPSLSP.

The N-terminal stretch at 1-26 (MGLPSRQPRLWLLLLVVLGWPQPCLT) is a signal peptide. The Lumenal portion of the chain corresponds to 27 to 200 (LDLIPYTPRI…DTWPGRRSGD (174 aa)). A glycan (N-linked (GlcNAc...) asparagine) is linked at Asn77. Residues 201–221 (MIIITSILSSLAGLLLLAFLA) traverse the membrane as a helical segment. Residues 222-279 (ASSVRFSSLWWPEEAPEQLRIGSFMGKRYMTHHIPPSEAATLPVGCEPGLERFPSLSP) are Cytoplasmic-facing.

It belongs to the uroplakin-3 family. As to quaternary structure, heterodimer with uroplakin-1B (UPK1B). In terms of tissue distribution, expression is urothelium-specific.

It is found in the cell membrane. Component of the asymmetric unit membrane (AUM); a highly specialized biomembrane elaborated by terminally differentiated urothelial cells. May play an important role in AUM-cytoskeleton interaction in terminally differentiated urothelial cells. It also contributes to the formation of urothelial glycocalyx which may play an important role in preventing bacterial adherence. This Bos taurus (Bovine) protein is Uroplakin-3b (UPK3B).